A 174-amino-acid polypeptide reads, in one-letter code: Squamosa promoter-binding-like protein 4 (174 aa).

The segment at 1–42 is disordered; the sequence is MEGKRSQGQGYMKKKSYLVEEDMETDTDEEEEVGRDRVRGSR. Residues 19-33 are compositionally biased toward acidic residues; the sequence is VEEDMETDTDEEEEV. The SBP-type zinc finger occupies 51–128; it reads LRLCQVDRCT…AGHNERRRKS (78 aa). The Zn(2+) site is built by C54, C59, C76, H79, C95, C98, H102, and C114. The Bipartite nuclear localization signal motif lies at 111 to 127; the sequence is KRSCRRRLAGHNERRRK. Residues 118 to 127 are compositionally biased toward basic residues; that stretch reads LAGHNERRRK. Disordered stretches follow at residues 118 to 148 and 155 to 174; these read LAGH…GQVV and SRVE…PQIR. A compositionally biased stretch (polar residues) spans 163-174; the sequence is MPNSSFKRPQIR.

Requires Zn(2+) as cofactor. In terms of tissue distribution, expressed in the rib meristem and inter-primordial tissue of the inflorescence apex.

The protein resides in the nucleus. Its subcellular location is the cytoplasm. Trans-acting factor that binds specifically to the consensus nucleotide sequence 5'-TNCGTACAA-3' of AP1 promoter. Promotes both vegetative phase change and flowering. This is Squamosa promoter-binding-like protein 4 (SPL4) from Arabidopsis thaliana (Mouse-ear cress).